A 316-amino-acid chain; its full sequence is ATP synthase gamma chain (316 aa).

This sequence belongs to the ATPase gamma chain family. As to quaternary structure, F-type ATPases have 2 components, CF(1) - the catalytic core - and CF(0) - the membrane proton channel. CF(1) has five subunits: alpha(3), beta(3), gamma(1), delta(1), epsilon(1). CF(0) has three main subunits: a, b and c.

Its subcellular location is the cellular thylakoid membrane. Its function is as follows. Produces ATP from ADP in the presence of a proton gradient across the membrane. The gamma chain is believed to be important in regulating ATPase activity and the flow of protons through the CF(0) complex. This Synechococcus sp. (strain ATCC 27144 / PCC 6301 / SAUG 1402/1) (Anacystis nidulans) protein is ATP synthase gamma chain.